We begin with the raw amino-acid sequence, 750 residues long: Methylmalonyl-CoA mutase, mitochondrial (750 aa).

Residues 1-32 (MLRAKNQLFLLSPHYLRQVKESSGSRLIQQRL) constitute a mitochondrion transit peptide. Gln-50 lines the malonyl-CoA pocket. Lys-89 carries the post-translational modification N6-acetyllysine. Residues 96–99 (YPTM) and 106–110 (TIRQY) contribute to the malonyl-CoA site. The residue at position 212 (Lys-212) is an N6-acetyllysine. Malonyl-CoA is bound by residues 216–218 (TIQ), Arg-228, Lys-255, His-265, and 304–306 (RLS). Lys-335 is modified (N6-acetyllysine). Lys-343 carries the N6-succinyllysine modification. Ser-481 carries the post-translational modification Phosphoserine. Lys-595 bears the N6-succinyllysine mark. Position 602 is an N6-acetyllysine (Lys-602). A B12-binding domain is found at 614–746 (RPRLLVAKMG…DDIEKCLEKK (133 aa)). Adenosylcob(III)alamin is bound at residue His-627.

Belongs to the methylmalonyl-CoA mutase family. As to quaternary structure, homodimer. Interacts (the apoenzyme form) with MMAA; the interaction is GTP dependent. Adenosylcob(III)alamin is required as a cofactor.

Its subcellular location is the mitochondrion matrix. It is found in the mitochondrion. The protein resides in the cytoplasm. It carries out the reaction (R)-methylmalonyl-CoA = succinyl-CoA. With respect to regulation, inhibited by itaconyl-CoA, a metabolite that inactivates the coenzyme B12 cofactor. Its function is as follows. Catalyzes the reversible isomerization of methylmalonyl-CoA (MMCoA) (generated from branched-chain amino acid metabolism and degradation of dietary odd chain fatty acids and cholesterol) to succinyl-CoA (3-carboxypropionyl-CoA), a key intermediate of the tricarboxylic acid cycle. The protein is Methylmalonyl-CoA mutase, mitochondrial (MMUT) of Bos taurus (Bovine).